The primary structure comprises 362 residues: Very-long-chain (3R)-3-hydroxyacyl-CoA dehydratase (362 aa).

The Cytoplasmic portion of the chain corresponds to 1 to 149; the sequence is MADCSLRPHV…DPFKHLKKGY (149 aa). Positions 5 to 94 constitute a CS domain; the sequence is SLRPHVHWAQ…KESSWWERLT (90 aa). Residues 111-135 are a coiled coil; the sequence is LDESDAEMELKEKEEEKINKMKIES. The helical transmembrane segment at 150–170 threads the bilayer; sequence LIMYNLVQFLGFSWIFVNMTV. The Lumenal segment spans residues 171-189; sequence RLFILGKDSFYDTFHTIAD. Residues 190–210 form a helical membrane-spanning segment; sequence MMYFCQTLALMEILNSLIGLV. Over 211–212 the chain is Cytoplasmic; sequence RS. Residues 213–233 form a helical membrane-spanning segment; the sequence is PLIPAVIQVFGRNFILFVVLG. The Lumenal segment spans residues 234-242; that stretch reads SLEEMQSKA. The chain crosses the membrane as a helical span at residues 243–263; sequence VVFFLFYFWSIIELFRYPYYM. The Cytoplasmic portion of the chain corresponds to 264–282; the sequence is LSCMGIEWKPLTWLRYTSW. Residues 283–303 form a helical membrane-spanning segment; that stretch reads IPLYPLGGLAEAVCLIQSIPI. Residues tyrosine 286 and glutamate 293 contribute to the active site. The Lumenal segment spans residues 304 to 319; sequence FSETGKFSLGLPNPLN. Residues 320 to 340 traverse the membrane as a helical segment; that stretch reads VTIQFSFLLQMYLIALFLGLF. The Cytoplasmic segment spans residues 341–362; that stretch reads VNFRYLYKQRKQHLGPKKRKMK.

Belongs to the very long-chain fatty acids dehydratase HACD family.

It localises to the endoplasmic reticulum membrane. It catalyses the reaction a very-long-chain (3R)-3-hydroxyacyl-CoA = a very-long-chain (2E)-enoyl-CoA + H2O. The enzyme catalyses (3R)-hydroxyhexadecanoyl-CoA = (2E)-hexadecenoyl-CoA + H2O. Its pathway is lipid metabolism; fatty acid biosynthesis. Functionally, catalyzes the third of the four reactions of the long-chain fatty acids elongation cycle. This endoplasmic reticulum-bound enzymatic process, allows the addition of two carbons to the chain of long- and very long-chain fatty acids/VLCFAs per cycle. This enzyme catalyzes the dehydration of the 3-hydroxyacyl-CoA intermediate into trans-2,3-enoyl-CoA, within each cycle of fatty acid elongation. Thereby, it participates in the production of VLCFAs of different chain lengths that are involved in multiple biological processes as precursors of membrane lipids and lipid mediators. Involved in Rac1-signaling pathways leading to the modulation of gene expression. The sequence is that of Very-long-chain (3R)-3-hydroxyacyl-CoA dehydratase from Gallus gallus (Chicken).